Consider the following 370-residue polypeptide: Actin-related protein 2/3 complex subunit 1A (370 aa).

WD repeat units follow at residues 6 to 45 (FLLE…WVKA), 50 to 89 (EHNG…WKPT), 140 to 179 (PIRS…VDEK), 202 to 241 (GTGG…QVST), 244 to 284 (TEFL…TFVS), and 322 to 365 (LHQN…SSIQ).

Belongs to the WD repeat ARPC1 family. In terms of assembly, probable component of the Arp2/3 complex in which it may replace ARPC1B.

It is found in the cytoplasm. It localises to the cytoskeleton. The protein resides in the nucleus. Probably functions as a component of the Arp2/3 complex which is involved in regulation of actin polymerization and together with an activating nucleation-promoting factor (NPF) mediates the formation of branched actin networks. In addition to its role in the cytoplasmic cytoskeleton, the Arp2/3 complex also promotes actin polymerization in the nucleus, thereby regulating gene transcription and repair of damaged DNA. The sequence is that of Actin-related protein 2/3 complex subunit 1A (ARPC1A) from Bos taurus (Bovine).